The sequence spans 591 residues: DNA ligase (591 aa).

NAD(+) is bound by residues 38-42 (DEKYD), 87-88 (SL), and glutamate 119. Lysine 121 acts as the N6-AMP-lysine intermediate in catalysis. The NAD(+) site is built by arginine 142, glutamate 181, lysine 298, and lysine 322. Zn(2+)-binding residues include cysteine 415, cysteine 418, cysteine 433, and cysteine 439.

The protein belongs to the NAD-dependent DNA ligase family. LigA subfamily. The cofactor is Mg(2+). It depends on Mn(2+) as a cofactor.

The enzyme catalyses NAD(+) + (deoxyribonucleotide)n-3'-hydroxyl + 5'-phospho-(deoxyribonucleotide)m = (deoxyribonucleotide)n+m + AMP + beta-nicotinamide D-nucleotide.. DNA ligase that catalyzes the formation of phosphodiester linkages between 5'-phosphoryl and 3'-hydroxyl groups in double-stranded DNA using NAD as a coenzyme and as the energy source for the reaction. It is essential for DNA replication and repair of damaged DNA. The protein is DNA ligase of Wigglesworthia glossinidia brevipalpis.